A 226-amino-acid polypeptide reads, in one-letter code: ATP synthase F(0) complex subunit a (226 aa).

A run of 6 helical transmembrane segments spans residues 12 to 32 (PTILGLPAAVPIILFPSLLIP), 68 to 88 (WSLMLISLITFIATTNLLGLL), 97 to 117 (QLSMNLAMAIPLWAGTVATGF), 138 to 158 (IPMLIIIETISLFIQPVALAV), 164 to 184 (ITAGHLLMHLIGAATMALSTI), and 200 to 222 (TTLEIAVALIQAYVFTLLVSLYL).

The protein belongs to the ATPase A chain family. As to quaternary structure, component of the ATP synthase complex composed at least of ATP5F1A/subunit alpha, ATP5F1B/subunit beta, ATP5MC1/subunit c (homooctomer), MT-ATP6/subunit a, MT-ATP8/subunit 8, ATP5ME/subunit e, ATP5MF/subunit f, ATP5MG/subunit g, ATP5MK/subunit k, ATP5MJ/subunit j, ATP5F1C/subunit gamma, ATP5F1D/subunit delta, ATP5F1E/subunit epsilon, ATP5PF/subunit F6, ATP5PB/subunit b, ATP5PD/subunit d, ATP5PO/subunit OSCP. ATP synthase complex consists of a soluble F(1) head domain (subunits alpha(3) and beta(3)) - the catalytic core - and a membrane F(0) domain - the membrane proton channel (subunits c, a, 8, e, f, g, k and j). These two domains are linked by a central stalk (subunits gamma, delta, and epsilon) rotating inside the F1 region and a stationary peripheral stalk (subunits F6, b, d, and OSCP). Interacts with DNAJC30; interaction is direct.

The protein resides in the mitochondrion inner membrane. The enzyme catalyses H(+)(in) = H(+)(out). Its function is as follows. Subunit a, of the mitochondrial membrane ATP synthase complex (F(1)F(0) ATP synthase or Complex V) that produces ATP from ADP in the presence of a proton gradient across the membrane which is generated by electron transport complexes of the respiratory chain. ATP synthase complex consist of a soluble F(1) head domain - the catalytic core - and a membrane F(1) domain - the membrane proton channel. These two domains are linked by a central stalk rotating inside the F(1) region and a stationary peripheral stalk. During catalysis, ATP synthesis in the catalytic domain of F(1) is coupled via a rotary mechanism of the central stalk subunits to proton translocation. With the subunit c (ATP5MC1), forms the proton-conducting channel in the F(0) domain, that contains two crucial half-channels (inlet and outlet) that facilitate proton movement from the mitochondrial intermembrane space (IMS) into the matrix. Protons are taken up via the inlet half-channel and released through the outlet half-channel, following a Grotthuss mechanism. The protein is ATP synthase F(0) complex subunit a of Hylobates lar (Lar gibbon).